A 316-amino-acid polypeptide reads, in one-letter code: Beta-agarase (316 aa).

The first 18 residues, methionine 1–alanine 18, serve as a signal peptide directing secretion. The region spanning tyrosine 27–glutamate 315 is the GH16 domain. Substrate is bound by residues tryptophan 78, glutamine 87–phenylalanine 97, and arginine 101–serine 103. Glutamate 167 serves as the catalytic Nucleophile. Glutamate 172 (proton donor) is an active-site residue. Arginine 197 provides a ligand contact to substrate.

Belongs to the glycosyl hydrolase 16 family.

The enzyme catalyses Hydrolysis of (1-&gt;4)-beta-D-galactosidic linkages in agarose, giving the tetramer as the predominant product.. Cleaves the beta-1,4-linkages between beta-D-galactose and alpha-L-3,6-anhydro-galactose residues in agarose. Cleaves agarose in a random manner with retention of the anomeric-bond configuration, producing beta-anomers that give rise progressively to alpha-anomers when mutarotation takes place. The sequence is that of Beta-agarase from Phocaeicola plebeius (strain DSM 17135 / JCM 12973 / CCUG 54634 / M2) (Bacteroides plebeius).